The primary structure comprises 320 residues: tRNA pseudouridine synthase B (320 aa).

D49 acts as the Nucleophile in catalysis.

It belongs to the pseudouridine synthase TruB family. Type 1 subfamily.

It catalyses the reaction uridine(55) in tRNA = pseudouridine(55) in tRNA. Functionally, responsible for synthesis of pseudouridine from uracil-55 in the psi GC loop of transfer RNAs. In Bartonella tribocorum (strain CIP 105476 / IBS 506), this protein is tRNA pseudouridine synthase B.